The primary structure comprises 143 residues: Large ribosomal subunit protein uL11 (143 aa).

This sequence belongs to the universal ribosomal protein uL11 family. Part of the ribosomal stalk of the 50S ribosomal subunit. Interacts with L10 and the large rRNA to form the base of the stalk. L10 forms an elongated spine to which L12 dimers bind in a sequential fashion forming a multimeric L10(L12)X complex. One or more lysine residues are methylated.

Forms part of the ribosomal stalk which helps the ribosome interact with GTP-bound translation factors. This chain is Large ribosomal subunit protein uL11, found in Bifidobacterium longum subsp. infantis (strain ATCC 15697 / DSM 20088 / JCM 1222 / NCTC 11817 / S12).